Here is a 641-residue protein sequence, read N- to C-terminus: Bifunctional enzyme NodQ (641 aa).

The interval 1–458 (MSYVQSIPPH…KSARSAMKNQ (458 aa)) is sulfate adenylyltransferase. The 215-residue stretch at 22–236 (KSILRFITCG…YLETVELDPT (215 aa)) folds into the tr-type G domain. The tract at residues 31–38 (GSVDDGKS) is G1. 31–38 (GSVDDGKS) serves as a coordination point for GTP. Residues 89–93 (GITID) form a G2 region. Positions 110-113 (DTPG) are G3. GTP is bound by residues 110 to 114 (DTPGH) and 165 to 168 (NKID). The segment at 165 to 168 (NKID) is G4. Positions 202–204 (SAR) are G5. The segment at 459–641 (LPAVLWFTGL…GQMTPLQRPT (183 aa)) is adenylyl-sulfate kinase. Residue 467 to 474 (GLSGSGKS) coordinates ATP. The Phosphoserine intermediate role is filled by serine 541.

It in the C-terminal section; belongs to the APS kinase family. This sequence in the N-terminal section; belongs to the TRAFAC class translation factor GTPase superfamily. Classic translation factor GTPase family. CysN/NodQ subfamily. As to quaternary structure, sulfate-activating enzymes, NodP and NodQ, may be physically associated.

The catalysed reaction is sulfate + ATP + H(+) = adenosine 5'-phosphosulfate + diphosphate. It carries out the reaction adenosine 5'-phosphosulfate + ATP = 3'-phosphoadenylyl sulfate + ADP + H(+). Functionally, proposed to provide activated sulfate for transfer to Nod factor. ATP sulfurylase may be the GTPase, regulating ATP sulfurylase activity. Its function is as follows. APS kinase catalyzes the synthesis of activated sulfate. The sequence is that of Bifunctional enzyme NodQ (nodQ) from Rhizobium meliloti (strain 1021) (Ensifer meliloti).